The primary structure comprises 546 residues: Chaperonin GroEL (546 aa).

ATP-binding positions include 30–33, K51, 87–91, G415, 479–481, and D495; these read TLGP, DGTTT, and NAA. Residues 526-546 are disordered; sequence KEDAPMPGGMPGGMGGMGMDM. Residues 534–546 show a composition bias toward gly residues; it reads GMPGGMGGMGMDM.

Belongs to the chaperonin (HSP60) family. As to quaternary structure, forms a cylinder of 14 subunits composed of two heptameric rings stacked back-to-back. Interacts with the co-chaperonin GroES.

Its subcellular location is the cytoplasm. It carries out the reaction ATP + H2O + a folded polypeptide = ADP + phosphate + an unfolded polypeptide.. Together with its co-chaperonin GroES, plays an essential role in assisting protein folding. The GroEL-GroES system forms a nano-cage that allows encapsulation of the non-native substrate proteins and provides a physical environment optimized to promote and accelerate protein folding. In Burkholderia thailandensis, this protein is Chaperonin GroEL.